A 473-amino-acid polypeptide reads, in one-letter code: Probable serine/threonine-protein kinase glkA (473 aa).

Positions 1–84 are disordered; it reads MTIPTDNNSS…QSSSTATVNS (84 aa). Positions 7–84 are enriched in low complexity; that stretch reads NNSSNNKGYN…QSSSTATVNS (78 aa). In terms of domain architecture, Protein kinase spans 91 to 366; it reads YEIIKQVGQG…IDEIIAHPFL (276 aa). ATP is bound by residues 97-105 and K119; that span reads VGQGTFGKV. D208 acts as the Proton acceptor in catalysis. 2 disordered regions span residues 389–418 and 437–473; these read GKSS…SNNK and SSNL…TNTI. A compositionally biased stretch (low complexity) spans 442–466; it reads SIDNSNNGKSSSSSNNIPSLNNSNN.

Belongs to the protein kinase superfamily. CMGC Ser/Thr protein kinase family. GSK-3 subfamily.

The catalysed reaction is L-seryl-[tau protein] + ATP = O-phospho-L-seryl-[tau protein] + ADP + H(+). The enzyme catalyses L-threonyl-[tau protein] + ATP = O-phospho-L-threonyl-[tau protein] + ADP + H(+). The protein is Probable serine/threonine-protein kinase glkA (glkA) of Dictyostelium discoideum (Social amoeba).